We begin with the raw amino-acid sequence, 225 residues long: Prepilin leader peptidase/N-methyltransferase (225 aa).

The Periplasmic portion of the chain corresponds to 1–2 (MT). Residues 3 to 23 (MLLPLFILVGFIADYFVNAIA) traverse the membrane as a helical segment. Residues 24 to 67 (YHLSPLEDKTALTFRQVLVHFRQKKYAWHDTVPLILCVAAAIAC) are Cytoplasmic-facing. Residues 68-88 (ALAPFTPIVTGALFLYFCFVL) form a helical membrane-spanning segment. Residues 89–103 (TLSVIDFRTQLLPDK) lie on the Periplasmic side of the membrane. Residues 104–124 (LTLPLLWLGLVFNAQYGLIDL) form a helical membrane-spanning segment. The Cytoplasmic segment spans residues 125 to 127 (HDA). Residues 128–148 (VYGAVAGYGVLWCVYWGVWLV) traverse the membrane as a helical segment. The Periplasmic portion of the chain corresponds to 149 to 174 (CHKEGLGYGDFKLLAAAGAWCGWQTL). Residues 175 to 195 (PMILLIASLGGIGYAIVSQLL) traverse the membrane as a helical segment. The Cytoplasmic portion of the chain corresponds to 196–202 (QRRTITT). A helical transmembrane segment spans residues 203–223 (IAFGPWLALGSMINLGYLAWI). Over 224 to 225 (SY) the chain is Periplasmic.

This sequence belongs to the peptidase A24 family.

The protein localises to the cell inner membrane. The enzyme catalyses Typically cleaves a -Gly-|-Phe- bond to release an N-terminal, basic peptide of 5-8 residues from type IV prepilin, and then N-methylates the new N-terminal amino group, the methyl donor being S-adenosyl-L-methionine.. Plays a role in type II pseudopili formation by proteolytically removing the leader sequence from substrate proteins and subsequently monomethylating the alpha-amino group of the newly exposed N-terminal phenylalanine. Substrates include proteins required for biogenesis of the type II general secretory apparatus. This is Prepilin leader peptidase/N-methyltransferase (gspO) from Escherichia coli (strain K12).